We begin with the raw amino-acid sequence, 628 residues long: Glutamyl-tRNA(Gln) amidotransferase subunit E (628 aa).

It belongs to the GatB/GatE family. GatE subfamily. Heterodimer of GatD and GatE.

It carries out the reaction L-glutamyl-tRNA(Gln) + L-glutamine + ATP + H2O = L-glutaminyl-tRNA(Gln) + L-glutamate + ADP + phosphate + H(+). In terms of biological role, allows the formation of correctly charged Gln-tRNA(Gln) through the transamidation of misacylated Glu-tRNA(Gln) in organisms which lack glutaminyl-tRNA synthetase. The reaction takes place in the presence of glutamine and ATP through an activated gamma-phospho-Glu-tRNA(Gln). The GatDE system is specific for glutamate and does not act on aspartate. This chain is Glutamyl-tRNA(Gln) amidotransferase subunit E, found in Thermococcus gammatolerans (strain DSM 15229 / JCM 11827 / EJ3).